We begin with the raw amino-acid sequence, 1847 residues long: Replication factor C small subunit (1847 aa).

DOD-type homing endonuclease domains are found at residues 179–311 (WLGY…RFGI), 780–927 (MLGL…ISGI), and 1348–1508 (LLGF…EFEV).

This sequence belongs to the activator 1 small subunits family. RfcS subfamily. Heteromultimer composed of small subunits (RfcS) and large subunits (RfcL). Post-translationally, this protein undergoes a protein self splicing that involves a post-translational excision of the intervening region (intein) followed by peptide ligation.

Functionally, part of the RFC clamp loader complex which loads the PCNA sliding clamp onto DNA. The chain is Replication factor C small subunit (rfcS) from Methanocaldococcus jannaschii (strain ATCC 43067 / DSM 2661 / JAL-1 / JCM 10045 / NBRC 100440) (Methanococcus jannaschii).